Reading from the N-terminus, the 496-residue chain is COP9 signalosome complex subunit 3 (496 aa).

One can recognise a PCI domain in the interval 243–411; sequence QASHCLGIVI…GNETTTMLRF (169 aa). A disordered region spans residues 468 to 496; the sequence is GSSERSGVVGSTEADGGGDLDEDLMGDGR. Residues 483–496 show a composition bias toward acidic residues; it reads GGGDLDEDLMGDGR.

This sequence belongs to the CSN3 family. Component of the COP9 signalosome (CSN) complex.

It is found in the cytoplasm. Its subcellular location is the nucleus. In terms of biological role, component of the COP9 signalosome (CSN) complex that acts as an regulator of the ubiquitin (Ubl) conjugation pathway by mediating the deneddylation of the cullin subunit of SCF-type E3 ubiquitin-protein ligase complexes. The CSN complex seems to link protein degradation to sexual development. This chain is COP9 signalosome complex subunit 3 (csnC), found in Emericella nidulans (strain FGSC A4 / ATCC 38163 / CBS 112.46 / NRRL 194 / M139) (Aspergillus nidulans).